A 252-amino-acid chain; its full sequence is Phosphate import ATP-binding protein PstB 1 (252 aa).

In terms of domain architecture, ABC transporter spans Leu6–Ile247. An ATP-binding site is contributed by Gly38–Ser45.

The protein belongs to the ABC transporter superfamily. Phosphate importer (TC 3.A.1.7) family. The complex is composed of two ATP-binding proteins (PstB), two transmembrane proteins (PstC and PstA) and a solute-binding protein (PstS).

It is found in the cell membrane. It carries out the reaction phosphate(out) + ATP + H2O = ADP + 2 phosphate(in) + H(+). Functionally, part of the ABC transporter complex PstSACB involved in phosphate import. Responsible for energy coupling to the transport system. This Streptococcus agalactiae serotype Ia (strain ATCC 27591 / A909 / CDC SS700) protein is Phosphate import ATP-binding protein PstB 1.